The sequence spans 617 residues: Dihydroxy-acid dehydratase (617 aa).

Asp-81 lines the Mg(2+) pocket. Position 122 (Cys-122) interacts with [2Fe-2S] cluster. Positions 123 and 124 each coordinate Mg(2+). Lys-124 is subject to N6-carboxylysine. Position 195 (Cys-195) interacts with [2Fe-2S] cluster. Glu-491 contacts Mg(2+). The active-site Proton acceptor is the Ser-517.

The protein belongs to the IlvD/Edd family. As to quaternary structure, homodimer. Requires [2Fe-2S] cluster as cofactor. It depends on Mg(2+) as a cofactor.

The catalysed reaction is (2R)-2,3-dihydroxy-3-methylbutanoate = 3-methyl-2-oxobutanoate + H2O. It carries out the reaction (2R,3R)-2,3-dihydroxy-3-methylpentanoate = (S)-3-methyl-2-oxopentanoate + H2O. The protein operates within amino-acid biosynthesis; L-isoleucine biosynthesis; L-isoleucine from 2-oxobutanoate: step 3/4. It functions in the pathway amino-acid biosynthesis; L-valine biosynthesis; L-valine from pyruvate: step 3/4. Functionally, functions in the biosynthesis of branched-chain amino acids. Catalyzes the dehydration of (2R,3R)-2,3-dihydroxy-3-methylpentanoate (2,3-dihydroxy-3-methylvalerate) into 2-oxo-3-methylpentanoate (2-oxo-3-methylvalerate) and of (2R)-2,3-dihydroxy-3-methylbutanoate (2,3-dihydroxyisovalerate) into 2-oxo-3-methylbutanoate (2-oxoisovalerate), the penultimate precursor to L-isoleucine and L-valine, respectively. This chain is Dihydroxy-acid dehydratase, found in Rhodospirillum rubrum (strain ATCC 11170 / ATH 1.1.1 / DSM 467 / LMG 4362 / NCIMB 8255 / S1).